The chain runs to 5065 residues: Dynein heavy chain-like protein 1 (5065 aa).

The interval Met-1–Glu-1957 is stem. Positions Gln-1677–Lys-1705 form a coiled coil. An AAA 1 region spans residues Tyr-1958 to Ser-2179. Gly-1996–Thr-2003 serves as a coordination point for ATP. The segment at Phe-2203 to Thr-2223 is disordered. The segment covering Asn-2204–Asn-2215 has biased composition (low complexity). AAA regions lie at residues Asn-2281–Ile-2632, Asp-2751–Ala-3004, and Ile-3097–Tyr-3367. An ATP-binding site is contributed by Gly-2319–Ser-2326. Positions Glu-2507–Asn-2529 are disordered. Residues Gly-2790–Thr-2797 and Gly-3135–Thr-3142 each bind ATP. A stalk region spans residues Ile-3386 to Ser-3701. Coiled-coil stretches lie at residues Glu-3388–Gln-3466 and Thr-3970–Asn-3997. 2 AAA regions span residues Leu-3754–Lys-3983 and Phe-4289–Ser-4507. Positions Lys-4686–Lys-4705 are enriched in basic and acidic residues. Residues Lys-4686–Glu-4727 are disordered.

The protein belongs to the dynein heavy chain family. Consists of at least two heavy chains and a number of intermediate and light chains.

Its subcellular location is the cytoplasm. It localises to the cytoskeleton. In terms of biological role, acts as a motor for the intracellular retrograde motility of vesicles and organelles along microtubules. Dynein has ATPase activity; the force-producing power stroke is thought to occur on release of ADP. This is Dynein heavy chain-like protein 1 from Plasmodium falciparum (isolate 3D7).